The following is a 312-amino-acid chain: Putative pyridoxal kinase BUD16 (312 aa).

Serine 9, threonine 44, and tyrosine 122 together coordinate substrate. ATP-binding positions include 183-184 (TS) and 211-223 (RVPF…TGVG). A substrate-binding site is contributed by aspartate 224.

Belongs to the pyridoxine kinase family. A divalent metal cation serves as cofactor.

It is found in the cytoplasm. The protein localises to the nucleus. It carries out the reaction pyridoxal + ATP = pyridoxal 5'-phosphate + ADP + H(+). Its function is as follows. Required for synthesis of pyridoxal-5-phosphate from vitamin B6. Important for bud site selection. The polypeptide is Putative pyridoxal kinase BUD16 (BUD16) (Saccharomyces cerevisiae (strain ATCC 204508 / S288c) (Baker's yeast)).